We begin with the raw amino-acid sequence, 322 residues long: Putative ankyrin repeat protein L897 (322 aa).

ANK repeat units follow at residues 88–117 (DNEY…SYDM), 181–210 (NIID…FWAN), and 248–277 (NKNE…QTDH).

In Acanthamoeba polyphaga (Amoeba), this protein is Putative ankyrin repeat protein L897.